Consider the following 251-residue polypeptide: Sugar fermentation stimulation protein homolog (251 aa).

The protein belongs to the SfsA family.

The polypeptide is Sugar fermentation stimulation protein homolog (Yersinia pseudotuberculosis serotype O:1b (strain IP 31758)).